A 504-amino-acid polypeptide reads, in one-letter code: 2,3-bisphosphoglycerate-independent phosphoglycerate mutase (504 aa).

The Mn(2+) site is built by Asp11 and Ser61. The active-site Phosphoserine intermediate is Ser61. Residues His122, 152–153 (RD), Arg183, Arg189, 255–258 (RNDR), and Lys329 contribute to the substrate site. 5 residues coordinate Mn(2+): Asp396, His400, Asp437, His438, and His455.

The protein belongs to the BPG-independent phosphoglycerate mutase family. In terms of assembly, monomer. Mn(2+) serves as cofactor.

The enzyme catalyses (2R)-2-phosphoglycerate = (2R)-3-phosphoglycerate. Its pathway is carbohydrate degradation; glycolysis; pyruvate from D-glyceraldehyde 3-phosphate: step 3/5. In terms of biological role, catalyzes the interconversion of 2-phosphoglycerate and 3-phosphoglycerate. In Bacteroides fragilis (strain YCH46), this protein is 2,3-bisphosphoglycerate-independent phosphoglycerate mutase.